A 2894-amino-acid polypeptide reads, in one-letter code: uncharacterized protein (2894 aa).

A helical transmembrane segment spans residues 8-28 (ISIFVFTILLLSNVSLGLNVS). 20 PbH1 repeats span residues 543 to 567 (EVRW…DISL), 2085 to 2107 (NYPL…SMLN), 2135 to 2156 (FGNI…VLYK), 2158 to 2180 (GNGI…YSKN), 2201 to 2223 (ISSI…LLEN), 2224 to 2244 (SSSS…YLKE), 2245 to 2266 (NYIS…EIVN), 2267 to 2289 (SSNV…AIFN), 2290 to 2311 (GENV…LSYG), 2341 to 2363 (LNNL…FIYS), 2367 to 2389 (ASNV…YIYG), 2390 to 2419 (VNAI…KISG), 2422 to 2444 (TKGV…SLEG), 2455 to 2477 (VENN…YIGG), 2479 to 2501 (VENV…LIQE), 2512 to 2542 (GTNI…TVGA), 2550 to 2582 (NGYI…EVYG), 2589 to 2611 (SLEF…LIGA), 2612 to 2633 (SKDI…TIPN), and 2638 to 2660 (PYNI…DLDD).

It localises to the membrane. This is an uncharacterized protein from Methanocaldococcus jannaschii (strain ATCC 43067 / DSM 2661 / JAL-1 / JCM 10045 / NBRC 100440) (Methanococcus jannaschii).